A 100-amino-acid chain; its full sequence is Urease subunit gamma (100 aa).

It belongs to the urease gamma subunit family. In terms of assembly, heterotrimer of UreA (gamma), UreB (beta) and UreC (alpha) subunits. Three heterotrimers associate to form the active enzyme.

It localises to the cytoplasm. The catalysed reaction is urea + 2 H2O + H(+) = hydrogencarbonate + 2 NH4(+). It functions in the pathway nitrogen metabolism; urea degradation; CO(2) and NH(3) from urea (urease route): step 1/1. This is Urease subunit gamma from Pseudomonas putida (strain W619).